A 229-amino-acid chain; its full sequence is RNA pyrophosphohydrolase (229 aa).

The region spanning 6–149 (GFRPNVGIIL…KRGVYEMALT (144 aa)) is the Nudix hydrolase domain. The Nudix box signature appears at 38–59 (GGIDRGETPEQAMFRELHEEVG). Residues 191–229 (KPGMELPPGASFDPDPQNSVPAPLEALPTLPVPKKPLDA) are disordered. The span at 220–229 (LPVPKKPLDA) shows a compositional bias: pro residues.

It belongs to the Nudix hydrolase family. RppH subfamily. The cofactor is a divalent metal cation.

Its function is as follows. Accelerates the degradation of transcripts by removing pyrophosphate from the 5'-end of triphosphorylated RNA, leading to a more labile monophosphorylated state that can stimulate subsequent ribonuclease cleavage. The sequence is that of RNA pyrophosphohydrolase from Acidovorax ebreus (strain TPSY) (Diaphorobacter sp. (strain TPSY)).